Here is a 484-residue protein sequence, read N- to C-terminus: UDP-glycosyltransferase 73B4 (484 aa).

Catalysis depends on His-18, which acts as the Proton acceptor. An anthocyanidin-binding residues include His-18 and Asn-89. Asp-129 functions as the Charge relay in the catalytic mechanism. The UDP-alpha-D-glucose site is built by Ala-356, Gln-358, His-373, Trp-376, Asn-377, Ser-378, and Glu-381. Ala-396 contacts an anthocyanidin. The UDP-alpha-D-glucose site is built by Glu-397 and Gln-398.

This sequence belongs to the UDP-glycosyltransferase family. In terms of tissue distribution, specifically expressed in roots.

The enzyme catalyses a flavonol + UDP-alpha-D-glucose = a flavonol 3-O-beta-D-glucoside + UDP + H(+). Functionally, possesses quercetin 3-O-glucosyltransferase and low 7-O-glucosyltransferase activities in vitro. Also active in vitro on benzoates and benzoate derivatives. Can detoxify the explosive 2,4,6-trinitrotoluene in plant by forming O- or C-glucose conjugates. The polypeptide is UDP-glycosyltransferase 73B4 (UGT73B4) (Arabidopsis thaliana (Mouse-ear cress)).